The following is a 758-amino-acid chain: DNA ligase (758 aa).

Residues 1–28 are disordered; the sequence is MPENFGAMRQDGLVSTSESDSPAPAATP. NAD(+) is bound by residues 60-64, 109-110, and E148; these read DAEFD and SL. The N6-AMP-lysine intermediate role is filled by K150. 4 residues coordinate NAD(+): R171, E208, K324, and K348. Zn(2+) contacts are provided by C442, C445, C461, and C467. The 90-residue stretch at 660 to 749 folds into the BRCT domain; the sequence is SVRRTLAGLT…PDHSAEAEEN (90 aa). The interval 735-758 is disordered; it reads LLAHGPDHSAEAEENESEGSTTND.

Belongs to the NAD-dependent DNA ligase family. LigA subfamily. It depends on Mg(2+) as a cofactor. The cofactor is Mn(2+).

It carries out the reaction NAD(+) + (deoxyribonucleotide)n-3'-hydroxyl + 5'-phospho-(deoxyribonucleotide)m = (deoxyribonucleotide)n+m + AMP + beta-nicotinamide D-nucleotide.. In terms of biological role, DNA ligase that catalyzes the formation of phosphodiester linkages between 5'-phosphoryl and 3'-hydroxyl groups in double-stranded DNA using NAD as a coenzyme and as the energy source for the reaction. It is essential for DNA replication and repair of damaged DNA. The sequence is that of DNA ligase from Renibacterium salmoninarum (strain ATCC 33209 / DSM 20767 / JCM 11484 / NBRC 15589 / NCIMB 2235).